The primary structure comprises 1405 residues: Sterol 3-beta-glucosyltransferase (1405 aa).

Basic and acidic residues-rich tracts occupy residues 1-16 (MRPF…DRKL) and 95-105 (TGQRPRKESSV). 3 disordered regions span residues 1–27 (MRPF…SASR), 83–186 (ARFD…SATP), and 203–230 (DLKA…ASVS). The segment covering 106–115 (RKGTSVSVNT) has biased composition (polar residues). The segment covering 116–126 (SSLDPSQRSSS) has biased composition (low complexity). Over residues 206-218 (ASSTERSQSSLNE) the composition is skewed to polar residues. Positions 246-285 (EKVLVEYACSLLQSMLLQGYMYVTEGHICFYAYLPKKSTV) constitute a GRAM 1 domain. The 100-residue stretch at 285 to 384 (VAIKSGYLHK…WVKALQKVIF (100 aa)) folds into the PH domain. 2 disordered regions span residues 461 to 526 (SQHL…DSSD) and 566 to 642 (TIYG…SGAP). Residues 483–493 (RWSLTSGTSRA) show a composition bias toward polar residues. Basic and acidic residues predominate over residues 570 to 589 (LDRRPSGRERRGRRNSDETA). Positions 590–603 (RSPSTRVNVGTGQQ) are enriched in polar residues. Over residues 606-624 (ELDRRTDGNTSGREARDTT) the composition is skewed to basic and acidic residues. Positions 626-642 (ESDQYTQDPTKSFSGAP) are enriched in polar residues. The GRAM 2 domain occupies 724–790 (DRFRAHFALP…RDIENVEKEK (67 aa)). The UDP-alpha-D-glucose site is built by serine 911, arginine 912, aspartate 914, alanine 1214, histidine 1216, histidine 1229, glycine 1233, threonine 1234, aspartate 1253, and glutamine 1254. The interval 1330-1367 (SIASSTPFSPTPSAKTAAEQDADDDVEDSEEWTFVGDD) is disordered. The segment covering 1332–1348 (ASSTPFSPTPSAKTAAE) has biased composition (low complexity). The span at 1349-1367 (QDADDDVEDSEEWTFVGDD) shows a compositional bias: acidic residues.

It belongs to the glycosyltransferase 28 family.

The protein localises to the cytoplasm. It localises to the preautophagosomal structure membrane. It catalyses the reaction a sterol + UDP-alpha-D-glucose = a sterol 3-beta-D-glucoside + UDP + H(+). The enzyme catalyses ergosterol + UDP-alpha-D-glucose = ergosteryl 3-beta-D-glucoside + UDP + H(+). Functionally, sterol glycosyltransferase responsible for the glycosylation of ergosterol to form ergosterol-glucoside. The polypeptide is Sterol 3-beta-glucosyltransferase (Aspergillus fumigatus (strain ATCC MYA-4609 / CBS 101355 / FGSC A1100 / Af293) (Neosartorya fumigata)).